We begin with the raw amino-acid sequence, 215 residues long: Pyridoxine/pyridoxamine 5'-phosphate oxidase (215 aa).

Substrate is bound by residues 9–12 (RRDY) and K69. FMN is bound by residues 64 to 69 (RVLLLK), 79 to 80 (FT), K86, and Q108. Substrate contacts are provided by Y126, R130, and S134. FMN-binding positions include 143–144 (QS) and W188. 194 to 196 (RLH) provides a ligand contact to substrate. Residue R198 participates in FMN binding.

The protein belongs to the pyridoxamine 5'-phosphate oxidase family. In terms of assembly, homodimer. It depends on FMN as a cofactor.

It catalyses the reaction pyridoxamine 5'-phosphate + O2 + H2O = pyridoxal 5'-phosphate + H2O2 + NH4(+). The catalysed reaction is pyridoxine 5'-phosphate + O2 = pyridoxal 5'-phosphate + H2O2. It functions in the pathway cofactor metabolism; pyridoxal 5'-phosphate salvage; pyridoxal 5'-phosphate from pyridoxamine 5'-phosphate: step 1/1. The protein operates within cofactor metabolism; pyridoxal 5'-phosphate salvage; pyridoxal 5'-phosphate from pyridoxine 5'-phosphate: step 1/1. Its function is as follows. Catalyzes the oxidation of either pyridoxine 5'-phosphate (PNP) or pyridoxamine 5'-phosphate (PMP) into pyridoxal 5'-phosphate (PLP). The polypeptide is Pyridoxine/pyridoxamine 5'-phosphate oxidase (Pseudomonas putida (strain GB-1)).